Consider the following 1386-residue polypeptide: YLP motif-containing protein 1 (1386 aa).

Disordered regions lie at residues 1 to 336 (MYPN…EDAR) and 517 to 1068 (TSIP…PPGR). Residues 14–27 (YPPPPVPPPPPPVA) show a composition bias toward pro residues. 2 stretches are compositionally biased toward low complexity: residues 31–50 (ASPG…SSSG) and 59–80 (LAQL…LQPH). Pro residues-rich tracts occupy residues 81-93 (HLPP…PPVM), 102-114 (QPPP…PPGP), 148-158 (PESPPVPPGSY), 166-176 (MPPPQPPPSYY), and 184-203 (YLPP…PPSI). Positions 237 to 259 (STMTPQEQQQYWYRQHLLSLQQR) are enriched in polar residues. Basic residues predominate over residues 260 to 270 (TKVHLPGHKKG). A compositionally biased stretch (basic and acidic residues) spans 276–285 (DVPEPIKEEA). Residues 302–317 (PPLPPPNEEAPPPLSP) show a composition bias toward pro residues. The span at 320–333 (PQSEDSEDSEDSEE) shows a compositional bias: acidic residues. 3 stretches are compositionally biased toward pro residues: residues 517 to 558 (TSIP…PPPA), 566 to 603 (PVLP…PQGM), and 641 to 650 (PPSPYHPPPQ). The segment covering 651-667 (SEQVNSKPLNKVFSSEQ) has biased composition (polar residues). At Lys683 the chain carries N6-methyllysine. The segment covering 706 to 722 (RGPREQKEQLQKLKDFG) has biased composition (basic and acidic residues). Residues 746–761 (MYPPPGSYRPPPPMGK) show a composition bias toward pro residues. Residues 762–779 (PPGSIVRPSAPPARSSIP) are compositionally biased toward low complexity. 2 stretches are compositionally biased toward pro residues: residues 781–803 (TRPP…PPPV) and 848–878 (PVLP…PPPV). Lys894 participates in a covalent cross-link: Glycyl lysine isopeptide (Lys-Gly) (interchain with G-Cter in SUMO2). 4 stretches are compositionally biased toward basic and acidic residues: residues 904–938 (ITLR…EPYF), 945–1014 (TDHR…DRPP), 1023–1033 (GERRTYPEERM), and 1049–1068 (RVEK…PPGR). A Glycyl lysine isopeptide (Lys-Gly) (interchain with G-Cter in SUMO2) cross-link involves residue Lys951. The involved in interaction with PPP1CA stretch occupies residues 1336-1343 (KKRVRWAD).

As to quaternary structure, interacts with PPP1CA and NCOA5. Forms a complex with ILF2, ILF3, KHDRBS1, RBMX, NCOA5 and PPP1CA.

The protein localises to the nucleus. It is found in the nucleus speckle. In terms of biological role, plays a role in the reduction of telomerase activity during differentiation of embryonic stem cells by binding to the core promoter of TERT and controlling its down-regulation. The chain is YLP motif-containing protein 1 (Ylpm1) from Mus musculus (Mouse).